Reading from the N-terminus, the 457-residue chain is Phosphomethylpyrimidine synthase (457 aa).

Substrate-binding positions include asparagine 88, methionine 117, tyrosine 146, histidine 182, 204–206 (SRG), 245–248 (DACR), and glutamate 284. Position 288 (histidine 288) interacts with Zn(2+). Tyrosine 311 contributes to the substrate binding site. Histidine 352 lines the Zn(2+) pocket. The [4Fe-4S] cluster site is built by cysteine 428, cysteine 431, and cysteine 435.

The protein belongs to the ThiC family. It depends on [4Fe-4S] cluster as a cofactor.

It carries out the reaction 5-amino-1-(5-phospho-beta-D-ribosyl)imidazole + S-adenosyl-L-methionine = 4-amino-2-methyl-5-(phosphooxymethyl)pyrimidine + CO + 5'-deoxyadenosine + formate + L-methionine + 3 H(+). It functions in the pathway cofactor biosynthesis; thiamine diphosphate biosynthesis. Catalyzes the synthesis of the hydroxymethylpyrimidine phosphate (HMP-P) moiety of thiamine from aminoimidazole ribotide (AIR) in a radical S-adenosyl-L-methionine (SAM)-dependent reaction. This is Phosphomethylpyrimidine synthase from Clostridium tetani (strain Massachusetts / E88).